The following is a 304-amino-acid chain: N-acetylglucosaminyl-phosphatidylinositol de-N-acetylase (304 aa).

The Lumenal segment spans residues 1–20 (MKMLRRTKVNFSKLLYKITK). A helical membrane pass occupies residues 21–38 (LAIVLTILYIYFTPKIVS). Residues 39 to 304 (RNNASLQHIF…FVNEFDVYTY (266 aa)) are Cytoplasmic-facing.

It belongs to the PIGL family.

It localises to the endoplasmic reticulum membrane. It catalyses the reaction a 6-(N-acetyl-alpha-D-glucosaminyl)-1-(1,2-diacyl-sn-glycero-3-phospho)-1D-myo-inositol + H2O = a 6-(alpha-D-glucosaminyl)-1-(1,2-diacyl-sn-glycero-3-phospho)-1D-myo-inositol + acetate. It participates in glycolipid biosynthesis; glycosylphosphatidylinositol-anchor biosynthesis. Its function is as follows. Involved in the second step of GPI biosynthesis. De-N-acetylation of N-acetylglucosaminyl-phosphatidylinositol. The sequence is that of N-acetylglucosaminyl-phosphatidylinositol de-N-acetylase (GPI12) from Saccharomyces cerevisiae (strain ATCC 204508 / S288c) (Baker's yeast).